Consider the following 776-residue polypeptide: Lon protease (776 aa).

The Lon N-terminal domain maps to 12-209; sequence LPIIALRGLW…LVYKFVIKEI (198 aa). Residue 360–367 coordinates ATP; it reads GPPGVGKT. A Lon proteolytic domain is found at 596–776; sequence EDTVGVVNGL…VKEILDEVLI (181 aa). Active-site residues include Ser683 and Lys726.

It belongs to the peptidase S16 family. As to quaternary structure, homohexamer. Organized in a ring with a central cavity.

It localises to the cytoplasm. The catalysed reaction is Hydrolysis of proteins in presence of ATP.. ATP-dependent serine protease that mediates the selective degradation of mutant and abnormal proteins as well as certain short-lived regulatory proteins. Required for cellular homeostasis and for survival from DNA damage and developmental changes induced by stress. Degrades polypeptides processively to yield small peptide fragments that are 5 to 10 amino acids long. Binds to DNA in a double-stranded, site-specific manner. The sequence is that of Lon protease from Finegoldia magna (strain ATCC 29328 / DSM 20472 / WAL 2508) (Peptostreptococcus magnus).